Reading from the N-terminus, the 189-residue chain is UPF0301 protein CTLon_0458 (189 aa).

Belongs to the UPF0301 (AlgH) family.

In Chlamydia trachomatis serovar L2b (strain UCH-1/proctitis), this protein is UPF0301 protein CTLon_0458.